Reading from the N-terminus, the 1149-residue chain is ATP-dependent helicase/deoxyribonuclease subunit B (1149 aa).

8-15 (GRAGSGKS) provides a ligand contact to ATP. Residues cysteine 788, cysteine 1106, cysteine 1109, and cysteine 1115 each contribute to the [4Fe-4S] cluster site.

The protein belongs to the helicase family. AddB/RexB type 1 subfamily. In terms of assembly, heterodimer of AddA and AddB. It depends on Mg(2+) as a cofactor. [4Fe-4S] cluster serves as cofactor.

Its function is as follows. The heterodimer acts as both an ATP-dependent DNA helicase and an ATP-dependent, dual-direction single-stranded exonuclease. Recognizes the chi site generating a DNA molecule suitable for the initiation of homologous recombination. The AddB subunit has 5' -&gt; 3' nuclease activity but not helicase activity. This is ATP-dependent helicase/deoxyribonuclease subunit B from Ruminiclostridium cellulolyticum (strain ATCC 35319 / DSM 5812 / JCM 6584 / H10) (Clostridium cellulolyticum).